Here is a 279-residue protein sequence, read N- to C-terminus: uncharacterized protein (279 aa).

Positions 1–29 are enriched in low complexity; sequence MSSRYTSSYTPSSRYGSGWDYSSSYSSSR. Disordered stretches follow at residues 1–111 and 137–233; these read MSSR…APRE and LTLA…AEAL. The segment covering 30-44 has biased composition (basic and acidic residues); that stretch reads TSRDRDTGSYRDRDY. The span at 45-59 shows a compositional bias: low complexity; the sequence is SSTSYTSTRPRYSTY. Acidic residues predominate over residues 142-153; it reads EPEESEEEEDDE. A compositionally biased stretch (low complexity) spans 170 to 186; it reads ESSPVSSPVKEVSSAAS. Residues 189-205 show a composition bias toward polar residues; sequence ANDNGNETENRTPSPTV. A compositionally biased stretch (basic and acidic residues) spans 221–233; that stretch reads SDVKKEGGDAEAL.

This is an uncharacterized protein from Caenorhabditis elegans.